The sequence spans 369 residues: MEGTPSGAAPSSALAAVLKHSSALPPESAQVQGYDFNRGVDYHALLEAYGTTGFQATNFGRAVQQVNAMIEKKLEPLAVDEDHHEDLTQSRRPLTGCTIFLGYTSNLISSGIRETIRYLVQHNMVDVLVTTAGGVEEDLIKCLAPTYLGEFSLRGKELRENGINRIGNLLVPNDNYCKFEDWLMPILDQMVQEQNTEGVKWTPSKMISRLGKEINNPESVYYWAHKNHIPVLSPALTDGSLGDMIFFHSYKNPGLVLDIVEDLRLINMQAIFAKRTGMIILGGGVVKHHIANANLMRNGADYAVYINTAQEFDGSDSGARPDEAVSWGKIRMDAQPVKVYADASLVFPLLVAETFAQKADAFRAEKNED.

Residues 105–109 (SNLIS), 131–133 (TAG), Glu-137, and Asp-238 each bind NAD(+). 136–137 (EE) is a binding site for spermidine. A spermidine-binding site is contributed by Asp-243. Gly-283 lines the NAD(+) pocket. His-288 contacts spermidine. 308-309 (TA) provides a ligand contact to NAD(+). Spermidine is bound by residues 314-316 (GSD) and 323-329 (EAVSWGK). Lys-329 serves as the catalytic Nucleophile. Position 342–343 (342–343 (DA)) interacts with NAD(+).

Belongs to the deoxyhypusine synthase family. Requires NAD(+) as cofactor.

It catalyses the reaction [eIF5A protein]-L-lysine + spermidine = [eIF5A protein]-deoxyhypusine + propane-1,3-diamine. It participates in protein modification; eIF5A hypusination. Its function is as follows. Catalyzes the NAD-dependent oxidative cleavage of spermidine and the subsequent transfer of the butylamine moiety of spermidine to the epsilon-amino group of a critical lysine residue of the eIF-5A precursor protein to form the intermediate deoxyhypusine residue. This is the first step of the post-translational modification of that lysine into an unusual amino acid residue named hypusine. Hypusination is unique to mature eIF-5A factor and is essential for its function. In Rattus norvegicus (Rat), this protein is Deoxyhypusine synthase (Dhps).